Reading from the N-terminus, the 444-residue chain is Methylenetetrahydrofolate--tRNA-(uracil-5-)-methyltransferase TrmFO (444 aa).

G10 to G15 contacts FAD.

Belongs to the MnmG family. TrmFO subfamily. The cofactor is FAD.

The protein localises to the cytoplasm. The enzyme catalyses uridine(54) in tRNA + (6R)-5,10-methylene-5,6,7,8-tetrahydrofolate + NADH + H(+) = 5-methyluridine(54) in tRNA + (6S)-5,6,7,8-tetrahydrofolate + NAD(+). It carries out the reaction uridine(54) in tRNA + (6R)-5,10-methylene-5,6,7,8-tetrahydrofolate + NADPH + H(+) = 5-methyluridine(54) in tRNA + (6S)-5,6,7,8-tetrahydrofolate + NADP(+). Catalyzes the folate-dependent formation of 5-methyl-uridine at position 54 (M-5-U54) in all tRNAs. The sequence is that of Methylenetetrahydrofolate--tRNA-(uracil-5-)-methyltransferase TrmFO from Streptococcus pneumoniae serotype 4 (strain ATCC BAA-334 / TIGR4).